Reading from the N-terminus, the 332-residue chain is Malate dehydrogenase, cytoplasmic (332 aa).

NAD(+) contacts are provided by residues 16-17 (QI), aspartate 43, and glycine 90. Arginine 99 contributes to the oxaloacetate binding site. Residues glutamine 113 and asparagine 132 each coordinate NAD(+). Oxaloacetate contacts are provided by asparagine 132, arginine 163, histidine 188, and serine 243. Catalysis depends on histidine 188, which acts as the Proton acceptor.

It belongs to the LDH/MDH superfamily. MDH type 2 family. In terms of assembly, homodimer.

The protein localises to the cytoplasm. It carries out the reaction (S)-malate + NAD(+) = oxaloacetate + NADH + H(+). This chain is Malate dehydrogenase, cytoplasmic (CMDH), found in Medicago sativa (Alfalfa).